The following is a 1173-amino-acid chain: Thrombospondin-1 (1173 aa).

The N-terminal stretch at 1-18 (MKGIFLLLMLVMPQTHQA) is a signal peptide. The Laminin G-like domain occupies 22 to 224 (GNDDNSVFDL…LQNVRFVFGT (203 aa)). The interval 50–98 (HLVKGPDPSSPAYRIEDADLIPPLPEDKFQDLLDAIRADRGFILLATLR) is heparin-binding. N-linked (GlcNAc...) asparagine glycans are attached at residues N155 and N158. C174 and C235 are oxidised to a cystine. N-linked (GlcNAc...) asparagine glycans are attached at residues N250 and N363. Residues 319-376 (GVCLHNGVLHKNRDEWTVDSCTECTCQNSATICRKVSCPLMPCTNATIPDGECCPRCW) enclose the VWFC domain. TSP type-1 domains lie at 382–432 (DDDW…QDCD), 438–493 (DGGW…DPCP), and 495–550 (NGQW…QDCP). 18 disulfide bridges follow: C394-C426, C398-C431, C409-C416, C450-C487, C454-C492, C465-C477, C507-C544, C511-C549, C522-C534, C554-C565, C559-C575, C578-C589, C595-C611, C602-C620, C623-C647, C653-C666, C660-C679, and C681-C692. The EGF-like 1 domain maps to 550-590 (PIDGCLSNPCFAGVKCTSFIDGSWKCGSCPPGYRGNGITCK). One can recognise an EGF-like 2 domain in the interval 649-693 (PRNPCADGTHDCHKNARCIYLGHYSDPMFRCECRPGYAGNGIICG). 8 TSP type-3 repeats span residues 694–729 (EDTD…NSGQ), 730–765 (EDYD…NPAQ), 766–788 (YDYD…NPDQ), 789–824 (ADTD…NVDQ), 825–847 (KDTD…NPEQ), 848–885 (TDSD…NANQ), 886–921 (ADHD…NPDQ), and 922–957 (TDTN…EIST). 2 N-linked (GlcNAc...) asparagine glycosylation sites follow: N705 and N711. Disulfide bonds link C708/C716, C721/C741, C757/C777, C780/C800, C816/C836, C839/C859, C877/C897, C913/C933, and C949/C1170. The disordered stretch occupies residues 838-935 (NCPLEHNPEQ…GDGRGDACQY (98 aa)). Positions 886–897 (ADHDKDGKGDAC) are enriched in basic and acidic residues. A Cell attachment site motif is present at residues 929–931 (RGD). The 213-residue stretch at 961–1173 (RKFQMVPLDP…SDLKYECRDS (213 aa)) folds into the TSP C-terminal domain. N1070 is a glycosylation site (N-linked (GlcNAc...) asparagine).

The protein belongs to the thrombospondin family. As to quaternary structure, homotrimer; disulfide-linked.

It is found in the secreted. It localises to the cell surface. Its subcellular location is the extracellular space. The protein localises to the extracellular matrix. The protein resides in the endoplasmic reticulum. It is found in the sarcoplasmic reticulum. Functionally, adhesive glycoprotein that mediates cell-to-cell and cell-to-matrix interactions. Can bind to fibrinogen, fibronectin, laminin, type V collagen and integrins alpha-V/beta-1, alpha-V/beta-3 and alpha-IIb/beta-3. May play a role in ER stress response. In Xenopus laevis (African clawed frog), this protein is Thrombospondin-1 (thbs1).